The sequence spans 880 residues: Leucine--tRNA ligase (880 aa).

The short motif at 49–59 is the 'HIGH' region element; the sequence is PYPSGRIHMGH. A 'KMSKS' region motif is present at residues 638–642; sequence KMSKS. Position 641 (lysine 641) interacts with ATP.

Belongs to the class-I aminoacyl-tRNA synthetase family.

It is found in the cytoplasm. The catalysed reaction is tRNA(Leu) + L-leucine + ATP = L-leucyl-tRNA(Leu) + AMP + diphosphate. The protein is Leucine--tRNA ligase of Bartonella henselae (strain ATCC 49882 / DSM 28221 / CCUG 30454 / Houston 1) (Rochalimaea henselae).